Reading from the N-terminus, the 136-residue chain is Small ribosomal subunit protein uS9 (136 aa).

Positions 115–136 (KVKERKKPGLRKARKARQFSKR) are disordered. Residues 117 to 136 (KERKKPGLRKARKARQFSKR) are compositionally biased toward basic residues.

This sequence belongs to the universal ribosomal protein uS9 family.

This chain is Small ribosomal subunit protein uS9, found in Mycoplasmopsis pulmonis (strain UAB CTIP) (Mycoplasma pulmonis).